The following is a 513-amino-acid chain: Na(+)/H(+) antiporter NhaB (513 aa).

A run of 11 helical transmembrane segments spans residues 23–43, 52–72, 97–117, 144–164, 202–222, 238–258, 303–323, 348–368, 391–411, 447–467, and 475–495; these read LALI…PFVA, IFTL…LLAI, LLLM…LFIF, FLDA…FYGI, LMMH…VGEP, FFLR…LTCL, AIIG…VGLI, TESL…AVII, LFYI…VGTI, ATPN…APLI, and VWMA…CVEF.

Belongs to the NhaB Na(+)/H(+) (TC 2.A.34) antiporter family.

Its subcellular location is the cell inner membrane. It catalyses the reaction 2 Na(+)(in) + 3 H(+)(out) = 2 Na(+)(out) + 3 H(+)(in). In terms of biological role, na(+)/H(+) antiporter that extrudes sodium in exchange for external protons. This chain is Na(+)/H(+) antiporter NhaB, found in Escherichia coli (strain SMS-3-5 / SECEC).